Here is a 295-residue protein sequence, read N- to C-terminus: Phosphoribosylaminoimidazole-succinocarboxamide synthase (295 aa).

It belongs to the SAICAR synthetase family.

It catalyses the reaction 5-amino-1-(5-phospho-D-ribosyl)imidazole-4-carboxylate + L-aspartate + ATP = (2S)-2-[5-amino-1-(5-phospho-beta-D-ribosyl)imidazole-4-carboxamido]succinate + ADP + phosphate + 2 H(+). It functions in the pathway purine metabolism; IMP biosynthesis via de novo pathway; 5-amino-1-(5-phospho-D-ribosyl)imidazole-4-carboxamide from 5-amino-1-(5-phospho-D-ribosyl)imidazole-4-carboxylate: step 1/2. In Nitrosomonas europaea (strain ATCC 19718 / CIP 103999 / KCTC 2705 / NBRC 14298), this protein is Phosphoribosylaminoimidazole-succinocarboxamide synthase.